Consider the following 511-residue polypeptide: L-arabinose isomerase (511 aa).

Mn(2+)-binding residues include Glu316, Glu343, His360, and His459.

This sequence belongs to the arabinose isomerase family. The cofactor is Mn(2+).

The enzyme catalyses beta-L-arabinopyranose = L-ribulose. The protein operates within carbohydrate degradation; L-arabinose degradation via L-ribulose; D-xylulose 5-phosphate from L-arabinose (bacterial route): step 1/3. Functionally, catalyzes the conversion of L-arabinose to L-ribulose. The protein is L-arabinose isomerase of Arthrobacter sp. (strain FB24).